A 239-amino-acid polypeptide reads, in one-letter code: Ribosome assembly factor mrt4 (239 aa).

Belongs to the universal ribosomal protein uL10 family. Associates with the pre-60S ribosomal particle.

Its subcellular location is the nucleus. The protein resides in the nucleolus. It localises to the cytoplasm. Component of the ribosome assembly machinery. Nuclear paralog of the ribosomal protein P0, it binds pre-60S subunits at an early stage of assembly in the nucleolus, and is replaced by P0 in cytoplasmic pre-60S subunits and mature 80S ribosomes. This is Ribosome assembly factor mrt4 from Candida glabrata (strain ATCC 2001 / BCRC 20586 / JCM 3761 / NBRC 0622 / NRRL Y-65 / CBS 138) (Yeast).